The primary structure comprises 217 residues: Nucleoside diphosphate kinase homolog 5 (217 aa).

Residues 18 to 151 (ERTLALIKPD…REIRFMFPHS (134 aa)) form an NDK region.

The protein belongs to the NDK family.

The protein localises to the cell projection. It is found in the cilium. Functions as part of axonemal radial spoke complexes that play an important part in the motility of sperm and cilia. Does not seem to have nucleoside diphosphate kinase (NDPK) activity. Exhibits a 3'-5' exonuclease activity with a preference for single-stranded DNA, suggesting roles in DNA proofreading and repair. In Danio rerio (Zebrafish), this protein is Nucleoside diphosphate kinase homolog 5 (nme5).